Consider the following 769-residue polypeptide: Sensor histidine kinase ComP (769 aa).

Topologically, residues 1 to 9 (MKNLIKKFT) are cytoplasmic. The helical transmembrane segment at 10-33 (IAVIVLSILYISYTTYISMNGIII) threads the bilayer. At 34–113 (GTKIHKNDKS…DFDLVTLNRP (80 aa)) the chain is on the extracellular side. Residues 114 to 134 (YSFFLFVLPLFFYFLSIICIF) form a helical membrane-spanning segment. Over 135–144 (YILKVNKKRR) the chain is Cytoplasmic. Residues 145 to 167 (SFAAYILILLLLDISIAYISAGG) traverse the membrane as a helical segment. The Extracellular segment spans residues 168 to 235 (PFRGHIINRY…QDYLQVDIDF (68 aa)). The helical transmembrane segment at 236 to 257 (LATLNLVSFATLTLFSFSAIYL) threads the bilayer. Topologically, residues 258 to 272 (HLNKYKYAEHSFILK) are cytoplasmic. The helical transmembrane segment at 273-295 (LLILTNTLSFAPFLIFFVLPIIF) threads the bilayer. The Extracellular portion of the chain corresponds to 296–299 (TGNY). A helical membrane pass occupies residues 300–323 (IFPALASASLLVLIPFGLVYQFVA). At 324–337 (NKMFDIEFILGRMR) the chain is on the cytoplasmic side. A helical membrane pass occupies residues 338–357 (YYALLAMIPTLLIVGALVLF). The Extracellular segment spans residues 358 to 361 (DVMD). Residues 362–383 (IQMNPVRQTVFFFVVMFAVFYF) form a helical membrane-spanning segment. Over 384–769 (KEVMDFKFRL…GFKADIEIEL (386 aa)) the chain is Cytoplasmic. The 199-residue stretch at 571 to 769 (LARDLHDSVL…GFKADIEIEL (199 aa)) folds into the Histidine kinase domain. Phosphohistidine; by autocatalysis is present on H576.

Autophosphorylates on a histidine and transfers the phosphate group onto an aspartate in ComA, thus activating it.

The protein localises to the cell membrane. It carries out the reaction ATP + protein L-histidine = ADP + protein N-phospho-L-histidine.. Sensor in the two-component regulatory system ComP/ComA involved in a major quorum response pathway that regulates the development of genetic competence. Plays a role in sporulation, at least partly interchangeable with that of SpoIIJ. Probably activates ComA by phosphorylation. This Bacillus subtilis (strain 168) protein is Sensor histidine kinase ComP (comP).